The chain runs to 199 residues: Transcriptional regulatory protein DesR (199 aa).

One can recognise a Response regulatory domain in the interval 3–117; sequence SIFIAEDQQM…ELANAIRSVM (115 aa). 4-aspartylphosphate is present on aspartate 54. Residues 131-196 form the HTH luxR-type domain; sequence LYSEANPLTD…EAITRSKEKG (66 aa). A DNA-binding region (H-T-H motif) is located at residues 155 to 174; it reads TKEIAQELSIKSGTVRNYIS.

Post-translationally, phosphorylated by DesK.

Its subcellular location is the cytoplasm. Member of the two-component regulatory system DesR/DesK, responsible for cold induction of the des gene coding for the Delta5 acyl-lipid desaturase. This chain is Transcriptional regulatory protein DesR (desR), found in Bacillus subtilis (strain 168).